The chain runs to 158 residues: Small ribosomal subunit protein uS10m (158 aa).

Belongs to the universal ribosomal protein uS10 family.

It is found in the mitochondrion. The protein is Small ribosomal subunit protein uS10m (mrps-10) of Caenorhabditis briggsae.